The following is a 311-amino-acid chain: Zeta-sarcoglycan (311 aa).

Topologically, residues 1-50 are cytoplasmic; the sequence is MDRSTDLDIQELKMTREQYILATQQNNLPRPENAQLYPVGIYGWRKRCLY. A helical; Signal-anchor for type II membrane protein transmembrane segment spans residues 51 to 71; that stretch reads FFVLLLLVTMIVNLAMTIWIL. Residues 72–311 lie on the Extracellular side of the membrane; that stretch reads KVMNFTVDGM…QSSSSICLWN (240 aa). N-linked (GlcNAc...) asparagine glycans are attached at residues N75 and N123. A disulfide bond links C285 and C301.

This sequence belongs to the sarcoglycan beta/delta/gamma/zeta family. In terms of tissue distribution, expressed in the heart, skeletal muscle and arterial vascular smooth muscle.

It is found in the cell membrane. The protein localises to the sarcolemma. Its subcellular location is the cytoplasm. It localises to the cytoskeleton. Functionally, component of the sarcoglycan complex, a subcomplex of the dystrophin-glycoprotein complex which forms a link between the F-actin cytoskeleton and the extracellular matrix. May play a role in the maintenance of striated muscle membrane stability. In Mus musculus (Mouse), this protein is Zeta-sarcoglycan (Sgcz).